The primary structure comprises 312 residues: tRNA-cytidine(32) 2-sulfurtransferase (312 aa).

The PP-loop motif signature appears at S47–S52. [4Fe-4S] cluster is bound by residues C122, C125, and C213.

It belongs to the TtcA family. In terms of assembly, homodimer. Mg(2+) is required as a cofactor. [4Fe-4S] cluster serves as cofactor.

It is found in the cytoplasm. It catalyses the reaction cytidine(32) in tRNA + S-sulfanyl-L-cysteinyl-[cysteine desulfurase] + AH2 + ATP = 2-thiocytidine(32) in tRNA + L-cysteinyl-[cysteine desulfurase] + A + AMP + diphosphate + H(+). It functions in the pathway tRNA modification. Functionally, catalyzes the ATP-dependent 2-thiolation of cytidine in position 32 of tRNA, to form 2-thiocytidine (s(2)C32). The sulfur atoms are provided by the cysteine/cysteine desulfurase (IscS) system. The protein is tRNA-cytidine(32) 2-sulfurtransferase of Shewanella frigidimarina (strain NCIMB 400).